We begin with the raw amino-acid sequence, 62 residues long: Small EDRK-rich factor 1 (62 aa).

Composition is skewed to basic and acidic residues over residues 1–30 (MARG…KEDS) and 50–62 (IANE…TTEK). Residues 1-62 (MARGNQREIA…EKKSMQTTEK (62 aa)) form a disordered region.

This sequence belongs to the SERF family. In terms of assembly, interacts with SNCA; this interaction promotes the aggregation of SNCA. Expressed in brain (at protein level). Highly expressed in the testis.

Its subcellular location is the cytoplasm. The protein resides in the cytosol. The protein localises to the nucleus. Its function is as follows. Positive regulator of amyloid protein aggregation and proteotoxicity. Induces conformational changes in amyloid proteins, such as APP, HTT, and SNCA, driving them into compact formations preceding the formation of aggregates. This chain is Small EDRK-rich factor 1 (Serf1), found in Mus musculus (Mouse).